We begin with the raw amino-acid sequence, 238 residues long: 3-dehydroquinate dehydratase (238 aa).

3-dehydroquinate contacts are provided by residues 35–37 and R70; that span reads ELR. Catalysis depends on H133, which acts as the Proton donor/acceptor. K160 serves as the catalytic Schiff-base intermediate with substrate. 3-dehydroquinate-binding residues include R202 and Q225.

It belongs to the type-I 3-dehydroquinase family. Homodimer.

The catalysed reaction is 3-dehydroquinate = 3-dehydroshikimate + H2O. It participates in metabolic intermediate biosynthesis; chorismate biosynthesis; chorismate from D-erythrose 4-phosphate and phosphoenolpyruvate: step 3/7. In terms of biological role, involved in the third step of the chorismate pathway, which leads to the biosynthesis of aromatic amino acids. Catalyzes the cis-dehydration of 3-dehydroquinate (DHQ) and introduces the first double bond of the aromatic ring to yield 3-dehydroshikimate. This chain is 3-dehydroquinate dehydratase, found in Staphylococcus aureus (strain USA300).